Consider the following 432-residue polypeptide: Asparagine--tRNA ligase (432 aa).

It belongs to the class-II aminoacyl-tRNA synthetase family. In terms of assembly, homodimer.

It localises to the cytoplasm. It carries out the reaction tRNA(Asn) + L-asparagine + ATP = L-asparaginyl-tRNA(Asn) + AMP + diphosphate + H(+). The sequence is that of Asparagine--tRNA ligase from Lactobacillus delbrueckii subsp. bulgaricus (strain ATCC 11842 / DSM 20081 / BCRC 10696 / JCM 1002 / NBRC 13953 / NCIMB 11778 / NCTC 12712 / WDCM 00102 / Lb 14).